Reading from the N-terminus, the 89-residue chain is UPF0335 protein OCAR_5086/OCA5_c28780 (89 aa).

It belongs to the UPF0335 family.

This is UPF0335 protein OCAR_5086/OCA5_c28780 from Afipia carboxidovorans (strain ATCC 49405 / DSM 1227 / KCTC 32145 / OM5) (Oligotropha carboxidovorans).